A 102-amino-acid chain; its full sequence is Small ribosomal subunit protein uS10 (102 aa).

Belongs to the universal ribosomal protein uS10 family. As to quaternary structure, part of the 30S ribosomal subunit.

Its function is as follows. Involved in the binding of tRNA to the ribosomes. The protein is Small ribosomal subunit protein uS10 (rpsJ) of Bacillus subtilis (strain 168).